We begin with the raw amino-acid sequence, 28 residues long: Ranatuerin-2SEb (28 aa).

Cysteines 23 and 28 form a disulfide.

Expressed by the skin glands.

Its subcellular location is the secreted. Mast cell degranulating peptide. Causes histamine release from rat peritoneal mast cells in vitro. Has antibacterial activity against the Gram-negative bacterium E.coli K12 and Gram-positive bacterium M.luteus NCT C2665. This Lithobates sevosus (Dusky gopher frog) protein is Ranatuerin-2SEb.